The primary structure comprises 289 residues: G1/S-specific cyclin-D2 (289 aa).

In terms of domain architecture, Cyclin N-terminal spans 26–151 (LQNLLTIEER…VLGKLKWNLA (126 aa)). Positions 264–289 (QHNAGSKSVEDPDQATTPTDVRDVDL) are disordered. Serine 271 is subject to Phosphoserine. Residue threonine 280 is modified to Phosphothreonine.

This sequence belongs to the cyclin family. Cyclin D subfamily. In terms of assembly, interacts with either CDK4 or CDK6 protein kinase to form a serine/threonine kinase holoenzyme complex. The cyclin subunit imparts substrate specificity to the complex. Post-translationally, phosphorylation at Thr-280 by MAP kinases is required for ubiquitination and degradation by the DCX(AMBRA1) complex. In terms of processing, ubiquitinated by the DCX(AMBRA1) complex during the transition from G1 to S cell phase, leading to its degradation: ubiquitination is dependent on Thr-280 phosphorylation. The DCX(AMBRA1) complex represents the major regulator of CCND2 stability during the G1/S transition. Polyubiquitinated by the SCF(FBXL2) complex, leading to proteasomal degradation.

It localises to the nucleus. Its subcellular location is the cytoplasm. The protein localises to the nucleus membrane. Functionally, regulatory component of the cyclin D2-CDK4 (DC) complex that phosphorylates and inhibits members of the retinoblastoma (RB) protein family including RB1 and regulates the cell-cycle during G(1)/S transition. Phosphorylation of RB1 allows dissociation of the transcription factor E2F from the RB/E2F complex and the subsequent transcription of E2F target genes which are responsible for the progression through the G(1) phase. Hypophosphorylates RB1 in early G(1) phase. Cyclin D-CDK4 complexes are major integrators of various mitogenenic and antimitogenic signals. In Mus musculus (Mouse), this protein is G1/S-specific cyclin-D2.